Consider the following 473-residue polypeptide: Photosystem II CP43 reaction center protein (473 aa).

Positions 1–14 (MKTLYSLRRFYPVE) are excised as a propeptide. Thr15 bears the N-acetylthreonine mark. Position 15 is a phosphothreonine (Thr15). The next 5 membrane-spanning stretches (helical) occupy residues 69-93 (LFEV…PHLA), 134-155 (LLGP…KDRN), 178-200 (KALY…RKIT), 255-275 (KPFA…LSYS), and 291-312 (WFNN…ASQA). [CaMn4O5] cluster is bound at residue Glu367. Residues 447-471 (RARAAAAGFEKGIDRDFEPVLSMTP) form a helical membrane-spanning segment.

Belongs to the PsbB/PsbC family. PsbC subfamily. As to quaternary structure, PSII is composed of 1 copy each of membrane proteins PsbA, PsbB, PsbC, PsbD, PsbE, PsbF, PsbH, PsbI, PsbJ, PsbK, PsbL, PsbM, PsbT, PsbX, PsbY, PsbZ, Psb30/Ycf12, at least 3 peripheral proteins of the oxygen-evolving complex and a large number of cofactors. It forms dimeric complexes. Requires Binds multiple chlorophylls and provides some of the ligands for the Ca-4Mn-5O cluster of the oxygen-evolving complex. It may also provide a ligand for a Cl- that is required for oxygen evolution. PSII binds additional chlorophylls, carotenoids and specific lipids. as cofactor.

It localises to the plastid. It is found in the chloroplast thylakoid membrane. One of the components of the core complex of photosystem II (PSII). It binds chlorophyll and helps catalyze the primary light-induced photochemical processes of PSII. PSII is a light-driven water:plastoquinone oxidoreductase, using light energy to abstract electrons from H(2)O, generating O(2) and a proton gradient subsequently used for ATP formation. This is Photosystem II CP43 reaction center protein from Buxus microphylla (Littleleaf boxwood).